A 298-amino-acid polypeptide reads, in one-letter code: Inosose dehydratase (298 aa).

Belongs to the IolE/MocC family. Glutathione is required as a cofactor. It depends on Co(2+) as a cofactor. Requires Mn(2+) as cofactor.

The catalysed reaction is scyllo-inosose = 3D-3,5/4-trihydroxycyclohexane-1,2-dione + H2O. It participates in polyol metabolism; myo-inositol degradation into acetyl-CoA; acetyl-CoA from myo-inositol: step 2/7. In terms of biological role, catalyzes the dehydration of inosose (2-keto-myo-inositol, 2KMI or 2,4,6/3,5-pentahydroxycyclohexanone) to 3D-(3,5/4)-trihydroxycyclohexane-1,2-dione (D-2,3-diketo-4-deoxy-epi-inositol). The polypeptide is Inosose dehydratase (Clostridium botulinum (strain Eklund 17B / Type B)).